The following is a 630-amino-acid chain: Glutathione hydrolase proenzyme 1 (630 aa).

The Cytoplasmic segment spans residues 1 to 49 (MGINTSSAQSSGAASIARSSVNVKSGNRHLSSNKKSATSALEERASRPS). The helical; Signal-anchor for type II membrane protein transmembrane segment at 50–70 (ILVTFLVLAGTILSLYIWPIL) threads the bilayer. Over 71 to 630 (SPDLFFANQR…SRKQAVAAAY (560 aa)) the chain is Lumenal. A glycan (N-linked (GlcNAc...) asparagine) is linked at N156. R165 contacts L-glutamate. Residues N180, N315, N397, and N417 are each glycosylated (N-linked (GlcNAc...) asparagine). The active-site Nucleophile is T441. Residues S459, N461, D483, 511 to 512 (SS), and 532 to 533 (GG) contribute to the L-glutamate site. N-linked (GlcNAc...) asparagine glycosylation occurs at N612.

This sequence belongs to the gamma-glutamyltransferase family. As to quaternary structure, heterodimer composed of the light and heavy chains. The active site is located in the light chain. Cleaved by autocatalysis into a large and a small subunit.

It localises to the endoplasmic reticulum membrane. It catalyses the reaction an N-terminal (5-L-glutamyl)-[peptide] + an alpha-amino acid = 5-L-glutamyl amino acid + an N-terminal L-alpha-aminoacyl-[peptide]. It carries out the reaction glutathione + H2O = L-cysteinylglycine + L-glutamate. The catalysed reaction is an S-substituted glutathione + H2O = an S-substituted L-cysteinylglycine + L-glutamate. The protein operates within sulfur metabolism; glutathione metabolism. In terms of biological role, catalyzes the transfer of the gamma-glutamyl moiety of glutathione (GSH) and other gamma-glutamyl compounds to amino acids and peptides. Major GSH-degrading enzyme, catalyzing the hydrolytic release of L-glutamate from GSH. This Schizosaccharomyces pombe (strain 972 / ATCC 24843) (Fission yeast) protein is Glutathione hydrolase proenzyme 1 (ggt1).